The sequence spans 120 residues: NAD(P)H-quinone oxidoreductase subunit 3 (120 aa).

A run of 3 helical transmembrane segments spans residues 10 to 30 (FLGF…TNLI), 64 to 84 (MFAL…PWAV), and 89 to 109 (LGLL…IALA).

Belongs to the complex I subunit 3 family. As to quaternary structure, NDH-1 can be composed of about 15 different subunits; different subcomplexes with different compositions have been identified which probably have different functions.

The protein localises to the cellular thylakoid membrane. The enzyme catalyses a plastoquinone + NADH + (n+1) H(+)(in) = a plastoquinol + NAD(+) + n H(+)(out). It catalyses the reaction a plastoquinone + NADPH + (n+1) H(+)(in) = a plastoquinol + NADP(+) + n H(+)(out). Its function is as follows. NDH-1 shuttles electrons from an unknown electron donor, via FMN and iron-sulfur (Fe-S) centers, to quinones in the respiratory and/or the photosynthetic chain. The immediate electron acceptor for the enzyme in this species is believed to be plastoquinone. Couples the redox reaction to proton translocation, and thus conserves the redox energy in a proton gradient. Cyanobacterial NDH-1 also plays a role in inorganic carbon-concentration. This is NAD(P)H-quinone oxidoreductase subunit 3 from Prochlorococcus marinus (strain MIT 9515).